A 199-amino-acid chain; its full sequence is Probable molybdenum cofactor guanylyltransferase (199 aa).

GTP contacts are provided by residues 8 to 10 (LAG), Lys20, Asp65, and Asp96. Mg(2+) is bound at residue Asp96.

It belongs to the MobA family. Mg(2+) is required as a cofactor.

Its subcellular location is the cytoplasm. The enzyme catalyses Mo-molybdopterin + GTP + H(+) = Mo-molybdopterin guanine dinucleotide + diphosphate. Its function is as follows. Transfers a GMP moiety from GTP to Mo-molybdopterin (Mo-MPT) cofactor (Moco or molybdenum cofactor) to form Mo-molybdopterin guanine dinucleotide (Mo-MGD) cofactor. This Bacillus subtilis (strain 168) protein is Probable molybdenum cofactor guanylyltransferase.